The sequence spans 525 residues: GMP synthase [glutamine-hydrolyzing] (525 aa).

The Glutamine amidotransferase type-1 domain occupies 9 to 207 (RILILDFGSQ…VLEISGCEAL (199 aa)). C86 (nucleophile) is an active-site residue. Active-site residues include H181 and E183. Residues 208-400 (WTPANIVEDA…LGLPYDMVYR (193 aa)) enclose the GMPS ATP-PPase domain. An ATP-binding site is contributed by 235–241 (SGGVDSS).

As to quaternary structure, homodimer.

The catalysed reaction is XMP + L-glutamine + ATP + H2O = GMP + L-glutamate + AMP + diphosphate + 2 H(+). It functions in the pathway purine metabolism; GMP biosynthesis; GMP from XMP (L-Gln route): step 1/1. Functionally, catalyzes the synthesis of GMP from XMP. The sequence is that of GMP synthase [glutamine-hydrolyzing] from Ectopseudomonas mendocina (strain ymp) (Pseudomonas mendocina).